The primary structure comprises 1179 residues: Putative ankyrin repeat protein RF_0381 (1179 aa).

18 ANK repeats span residues 282–311 (NGYQSIHLVISGGNKGNIELQIRSTTMHRQ), 604–633 (NKDQLLRLGLQLGCVESVPLLITHGANPNA), 637–666 (HGVISLHCAAKNGNLDLAKLLAKNGADVNA), 670–699 (NGETVLHYAVKSGNLHLVKWLIENQANIHA), 703–732 (NGETVLHYAVSFNNSDLVYLLIAYGADVNA), 736–765 (NGLTALHYAVYDGNLDLVSLLISHGADVNA), 769–798 (SGETILYSAVDYGSPDLVYLLIAYGADVNA), 802–831 (NGETVLHYAVESGNLDLVSLLIHNGANVNN), 833–860 (KTILHFAAKSGNLNLVNWLIKNKADIHA), 864–893 (SGETILHFAAESGNLNLVNWLIKNKADIHA), 897–926 (SGETILHFAAKSGNLNLVNWLIKNKADIHA), 930–959 (SGETILHFAAKSGNLNLVNWLIKNKADIHA), 963–992 (SGETILHFAAESGNLNLVSLLIHNGTDINT), 996–1025 (DGLTALHYAVESGNLNLVSLLIHKGIDVNA), 1029–1058 (SGETILHFAVDLGSLDLVSLLMVRGADVNA), 1062–1091 (DGLTALHYAVESDNLALVSLLMVYGADVNA), 1095–1124 (SGETPLHYAVIFNSLDLVSLLIHNGADINT), and 1128–1157 (SGETVLNSIMEFNNCNILKSFILGGADINL).

The sequence is that of Putative ankyrin repeat protein RF_0381 from Rickettsia felis (strain ATCC VR-1525 / URRWXCal2) (Rickettsia azadi).